The following is a 191-amino-acid chain: RNA pyrophosphohydrolase (191 aa).

Residues 6-149 form the Nudix hydrolase domain; it reads GYRLNVGIIL…KREVYRQALS (144 aa). A Nudix box motif is present at residues 38–59; that stretch reads GGIKVDEDPDAAMFRELYEEVG. The interval 162-191 is disordered; that stretch reads GAQAVSDAGGTATRQIPVATEPSGPSSSQR.

It belongs to the Nudix hydrolase family. RppH subfamily. A divalent metal cation serves as cofactor.

Accelerates the degradation of transcripts by removing pyrophosphate from the 5'-end of triphosphorylated RNA, leading to a more labile monophosphorylated state that can stimulate subsequent ribonuclease cleavage. The chain is RNA pyrophosphohydrolase from Methylococcus capsulatus (strain ATCC 33009 / NCIMB 11132 / Bath).